The chain runs to 178 residues: ATP synthase subunit delta (178 aa).

The protein belongs to the ATPase delta chain family. As to quaternary structure, F-type ATPases have 2 components, F(1) - the catalytic core - and F(0) - the membrane proton channel. F(1) has five subunits: alpha(3), beta(3), gamma(1), delta(1), epsilon(1). F(0) has three main subunits: a(1), b(2) and c(10-14). The alpha and beta chains form an alternating ring which encloses part of the gamma chain. F(1) is attached to F(0) by a central stalk formed by the gamma and epsilon chains, while a peripheral stalk is formed by the delta and b chains.

The protein resides in the cell inner membrane. F(1)F(0) ATP synthase produces ATP from ADP in the presence of a proton or sodium gradient. F-type ATPases consist of two structural domains, F(1) containing the extramembraneous catalytic core and F(0) containing the membrane proton channel, linked together by a central stalk and a peripheral stalk. During catalysis, ATP synthesis in the catalytic domain of F(1) is coupled via a rotary mechanism of the central stalk subunits to proton translocation. Its function is as follows. This protein is part of the stalk that links CF(0) to CF(1). It either transmits conformational changes from CF(0) to CF(1) or is implicated in proton conduction. In Dechloromonas aromatica (strain RCB), this protein is ATP synthase subunit delta.